An 81-amino-acid polypeptide reads, in one-letter code: Defensin-like protein 153 (81 aa).

Residues 1 to 26 (MKNVSQVSVAVLLIFSILVLGIGVQG) form the signal peptide. 4 disulfides stabilise this stretch: C30/C81, C41/C60, C46/C75, and C50/C77.

It belongs to the DEFL family.

It localises to the secreted. This Arabidopsis thaliana (Mouse-ear cress) protein is Defensin-like protein 153 (LCR31).